The chain runs to 197 residues: Putative early 21.8 kDa protein (197 aa).

Its function is as follows. This protein is required for viral late gene expression. The sequence is that of Putative early 21.8 kDa protein (DA26) from Orgyia pseudotsugata (Douglas-fir tussock moth).